We begin with the raw amino-acid sequence, 794 residues long: Protocadherin beta-6 (794 aa).

An N-terminal signal peptide occupies residues 1–27 (MMQTKVQNKKRQVAFFILLMLWGEVGS). Residues 28-688 (ESIQYSVLEE…AQADLLTVYL (661 aa)) are Extracellular-facing. 5 Cadherin domains span residues 34–132 (VLEE…APEF), 137–241 (MLLK…VPEF), 246–345 (YEAQ…APEL), 350–449 (FISP…APAF), and 454–559 (YTLF…SPFV). The N-linked (GlcNAc...) asparagine glycan is linked to N46. A disulfide bond links C95 and C101. The N-linked (GlcNAc...) asparagine glycan is linked to N183. N416 carries N-linked (GlcNAc...) asparagine glycosylation. N565 carries an N-linked (GlcNAc...) asparagine glycan. Residues 566–669 (GSAPCTELVP…LVDGFSQPYL (104 aa)) enclose the Cadherin 6 domain. Residues 689–709 (VVALASVSSLFLFSVLLFVAV) traverse the membrane as a helical segment. Over 710-794 (RLCRRSRAAS…PTSRNSFPFS (85 aa)) the chain is Cytoplasmic. Positions 773 to 794 (PPQGTEREMEETPTSRNSFPFS) are disordered. Residues 784–794 (TPTSRNSFPFS) are compositionally biased toward polar residues.

As to quaternary structure, forms homodimers in trans (molecules expressed by two different cells). Forms promiscuous heterodimers in cis (at the plasma membrane of the same cell) with other protocadherins.

It is found in the cell membrane. Calcium-dependent cell-adhesion protein involved in cells self-recognition and non-self discrimination. Thereby, it is involved in the establishment and maintenance of specific neuronal connections in the brain. The protein is Protocadherin beta-6 of Pan troglodytes (Chimpanzee).